The sequence spans 138 residues: Putative pre-16S rRNA nuclease (138 aa).

It belongs to the YqgF nuclease family.

The protein resides in the cytoplasm. Its function is as follows. Could be a nuclease involved in processing of the 5'-end of pre-16S rRNA. In Listeria monocytogenes serotype 4b (strain CLIP80459), this protein is Putative pre-16S rRNA nuclease.